A 55-amino-acid chain; its full sequence is MLQYALVFFVIALIAAIFGFGGIAAGAVEIAKILFFIFLVVALVAAVMGLVRRGR.

A run of 2 helical transmembrane segments spans residues 5–25 and 30–50; these read ALVFFVIALIAAIFGFGGIAA and IAKILFFIFLVVALVAAVMGL.

The protein belongs to the UPF0391 family.

It localises to the cell membrane. This is UPF0391 membrane protein RALTA_A0099 from Cupriavidus taiwanensis (strain DSM 17343 / BCRC 17206 / CCUG 44338 / CIP 107171 / LMG 19424 / R1) (Ralstonia taiwanensis (strain LMG 19424)).